The following is a 225-amino-acid chain: Red fluorescent protein drFP583 (225 aa).

A cross-link (2-iminomethyl-5-imidazolinone (Gln-Gly)) is located at residues 66 to 68 (QYG). Position 67 is a (Z)-2,3-didehydrotyrosine (Tyr67).

It belongs to the GFP family. Homotetramer. Contains a chromophore consisting of modified amino acid residues. The chromophore is formed by autocatalytic backbone condensation between Xaa-N and Gly-(N+2), oxidation of Tyr-(N+1) to didehydrotyrosine, and formation of a double bond to the alpha-amino nitrogen of residue Xaa-N. Maturation of the chromophore requires nothing other than molecular oxygen.

Its function is as follows. Thought to play a role in photoprotection of the coral's resident symbiont microalgae's photosystems from photoinhibition caused by high light levels found near the surface of coral reefs. In deeper water, the fluorescence may be to convert blue light into longer wavelengths more suitable for use in photosynthesis by the microalgal symbionts. The chain is Red fluorescent protein drFP583 from Discosoma sp. (Sea anemone).